Here is a 431-residue protein sequence, read N- to C-terminus: Serine hydroxymethyltransferase (431 aa).

(6S)-5,6,7,8-tetrahydrofolate-binding positions include leucine 127 and 131-133; that span reads GHL. N6-(pyridoxal phosphate)lysine is present on lysine 236.

It belongs to the SHMT family. As to quaternary structure, homodimer. Pyridoxal 5'-phosphate is required as a cofactor.

It is found in the cytoplasm. It catalyses the reaction (6R)-5,10-methylene-5,6,7,8-tetrahydrofolate + glycine + H2O = (6S)-5,6,7,8-tetrahydrofolate + L-serine. It functions in the pathway one-carbon metabolism; tetrahydrofolate interconversion. Its pathway is amino-acid biosynthesis; glycine biosynthesis; glycine from L-serine: step 1/1. Its function is as follows. Catalyzes the reversible interconversion of serine and glycine with tetrahydrofolate (THF) serving as the one-carbon carrier. This reaction serves as the major source of one-carbon groups required for the biosynthesis of purines, thymidylate, methionine, and other important biomolecules. Also exhibits THF-independent aldolase activity toward beta-hydroxyamino acids, producing glycine and aldehydes, via a retro-aldol mechanism. The polypeptide is Serine hydroxymethyltransferase (Granulibacter bethesdensis (strain ATCC BAA-1260 / CGDNIH1)).